The sequence spans 105 residues: uncharacterized protein (105 aa).

The next 3 membrane-spanning stretches (helical) occupy residues 14 to 34 (ILLMLRLAVTAVAVFLAIVAW), 41 to 61 (ETVCFIAGVLCMYLAQLFAFL), and 80 to 100 (VGFTLELLPLACFIASLIFTI).

The protein resides in the cell membrane. This is an uncharacterized protein from Treponema pallidum (strain Nichols).